The following is a 107-amino-acid chain: Replication initiation control protein YabA (107 aa).

Zn(2+)-binding residues include His81, Cys83, Cys97, and Cys100.

The protein belongs to the YabA family. Homotetramer. Interacts with both DnaA and DnaN, acting as a bridge between these two proteins. Requires Zn(2+) as cofactor.

It localises to the cytoplasm. The protein localises to the nucleoid. Functionally, involved in control of chromosome replication initiation. Inhibits the cooperative binding of DnaA to the oriC region, thus negatively regulating initiation of chromosome replication. Inhibits the ability of DnaA-ATP to form a helix on DNA; does not disassemble preformed DnaA-DNA helices. Decreases the residence time of DnaA on the chromosome at its binding sites (oriC, replication forks and promoter-binding sites). Tethers DnaA to the replication machinery via the DNA polymerase beta sliding clamp subunit (dnaN). Associates with oriC and other DnaA targets on the chromosome in a DnaA-dependent manner. The polypeptide is Replication initiation control protein YabA (Streptococcus equi subsp. equi (strain 4047)).